A 257-amino-acid polypeptide reads, in one-letter code: UPF0246 protein HAPS_0280 (257 aa).

The protein belongs to the UPF0246 family.

The polypeptide is UPF0246 protein HAPS_0280 (Glaesserella parasuis serovar 5 (strain SH0165) (Haemophilus parasuis)).